The chain runs to 172 residues: R-phycocyanin-2 beta chain (172 aa).

Position 72 is an N4-methylasparagine (Asn72). Cys82 serves as a coordination point for (2R,3E)-phycocyanobilin. Position 153 (Cys153) interacts with (2R,3E)-phycoerythrobilin.

It belongs to the phycobiliprotein family. Heterodimer of an alpha and a beta chain. Contains two covalently linked bilin chromophores.

The protein resides in the cellular thylakoid membrane. In terms of biological role, light-harvesting photosynthetic bile pigment-protein from the phycobiliprotein complex. The polypeptide is R-phycocyanin-2 beta chain (rpcB) (Synechococcus sp. (strain WH8103)).